Here is a 276-residue protein sequence, read N- to C-terminus: Bis(5'-nucleosyl)-tetraphosphatase, symmetrical (276 aa).

Belongs to the Ap4A hydrolase family.

The catalysed reaction is P(1),P(4)-bis(5'-adenosyl) tetraphosphate + H2O = 2 ADP + 2 H(+). Its function is as follows. Hydrolyzes diadenosine 5',5'''-P1,P4-tetraphosphate to yield ADP. The protein is Bis(5'-nucleosyl)-tetraphosphatase, symmetrical of Legionella pneumophila (strain Lens).